The sequence spans 82 residues: Small ribosomal subunit protein bS16 (82 aa).

Belongs to the bacterial ribosomal protein bS16 family.

The protein is Small ribosomal subunit protein bS16 of Bdellovibrio bacteriovorus (strain ATCC 15356 / DSM 50701 / NCIMB 9529 / HD100).